Consider the following 482-residue polypeptide: Catalase (482 aa).

The span at 1 to 11 (MNAMTNKTLTT) shows a compositional bias: polar residues. The tract at residues 1-21 (MNAMTNKTLTTAAGAPVADNN) is disordered. Residues H57 and N130 contribute to the active site. Y340 lines the heme pocket.

Belongs to the catalase family. As to quaternary structure, homodimer. Heme serves as cofactor.

The catalysed reaction is 2 H2O2 = O2 + 2 H2O. Functionally, decomposes hydrogen peroxide into water and oxygen; serves to protect cells from the toxic effects of hydrogen peroxide. The protein is Catalase (katA) of Bordetella bronchiseptica (strain ATCC BAA-588 / NCTC 13252 / RB50) (Alcaligenes bronchisepticus).